A 172-amino-acid chain; its full sequence is Galectin-related protein (172 aa).

Residue Ala2 is modified to N-acetylalanine. Phosphoserine occurs at positions 22 and 25. The region spanning 39 to 168 (PFCGHIKGGM…TIKINGDLQI (130 aa)) is the Galectin domain.

In terms of assembly, monomer.

In terms of biological role, does not bind lactose, and may not bind carbohydrates. The sequence is that of Galectin-related protein (Lgalsl) from Mus musculus (Mouse).